We begin with the raw amino-acid sequence, 185 residues long: Elongation factor P (185 aa).

The protein belongs to the elongation factor P family.

It is found in the cytoplasm. Its pathway is protein biosynthesis; polypeptide chain elongation. Its function is as follows. Involved in peptide bond synthesis. Stimulates efficient translation and peptide-bond synthesis on native or reconstituted 70S ribosomes in vitro. Probably functions indirectly by altering the affinity of the ribosome for aminoacyl-tRNA, thus increasing their reactivity as acceptors for peptidyl transferase. The chain is Elongation factor P from Caldicellulosiruptor bescii (strain ATCC BAA-1888 / DSM 6725 / KCTC 15123 / Z-1320) (Anaerocellum thermophilum).